A 458-amino-acid polypeptide reads, in one-letter code: ATP synthase subunit beta (458 aa).

148–155 (GGAGVGKT) provides a ligand contact to ATP.

It belongs to the ATPase alpha/beta chains family. In terms of assembly, F-type ATPases have 2 components, CF(1) - the catalytic core - and CF(0) - the membrane proton channel. CF(1) has five subunits: alpha(3), beta(3), gamma(1), delta(1), epsilon(1). CF(0) has three main subunits: a(1), b(2) and c(9-12). The alpha and beta chains form an alternating ring which encloses part of the gamma chain. CF(1) is attached to CF(0) by a central stalk formed by the gamma and epsilon chains, while a peripheral stalk is formed by the delta and b chains.

The protein localises to the cell inner membrane. The catalysed reaction is ATP + H2O + 4 H(+)(in) = ADP + phosphate + 5 H(+)(out). Its function is as follows. Produces ATP from ADP in the presence of a proton gradient across the membrane. The catalytic sites are hosted primarily by the beta subunits. The chain is ATP synthase subunit beta from Francisella tularensis subsp. novicida (strain U112).